The chain runs to 230 residues: 2-C-methyl-D-erythritol 4-phosphate cytidylyltransferase (230 aa).

This sequence belongs to the IspD/TarI cytidylyltransferase family. IspD subfamily.

It catalyses the reaction 2-C-methyl-D-erythritol 4-phosphate + CTP + H(+) = 4-CDP-2-C-methyl-D-erythritol + diphosphate. It participates in isoprenoid biosynthesis; isopentenyl diphosphate biosynthesis via DXP pathway; isopentenyl diphosphate from 1-deoxy-D-xylulose 5-phosphate: step 2/6. Functionally, catalyzes the formation of 4-diphosphocytidyl-2-C-methyl-D-erythritol from CTP and 2-C-methyl-D-erythritol 4-phosphate (MEP). The chain is 2-C-methyl-D-erythritol 4-phosphate cytidylyltransferase from Synechocystis sp. (strain ATCC 27184 / PCC 6803 / Kazusa).